The sequence spans 129 residues: Small ribosomal subunit protein uS8c (129 aa).

This sequence belongs to the universal ribosomal protein uS8 family. As to quaternary structure, part of the 30S ribosomal subunit.

The protein localises to the plastid. It localises to the chloroplast. Its function is as follows. One of the primary rRNA binding proteins, it binds directly to 16S rRNA central domain where it helps coordinate assembly of the platform of the 30S subunit. The protein is Small ribosomal subunit protein uS8c (rps8) of Nephroselmis olivacea (Green alga).